The following is a 751-amino-acid chain: Phosphoribosylformylglycinamidine synthase subunit PurL (751 aa).

His54 is a catalytic residue. Residues Tyr57 and Lys106 each coordinate ATP. Glu108 contributes to the Mg(2+) binding site. Residues 109–112 (SHNH) and Arg131 contribute to the substrate site. His110 (proton acceptor) is an active-site residue. Asp132 contributes to the Mg(2+) binding site. Residue Gln256 coordinates substrate. Asp284 contacts Mg(2+). 328 to 330 (ESQ) serves as a coordination point for substrate. Residues Asp516 and Gly553 each coordinate ATP. A Mg(2+)-binding site is contributed by Asn554. Ser556 lines the substrate pocket.

Belongs to the FGAMS family. Monomer. Part of the FGAM synthase complex composed of 1 PurL, 1 PurQ and 2 PurS subunits.

Its subcellular location is the cytoplasm. The enzyme catalyses N(2)-formyl-N(1)-(5-phospho-beta-D-ribosyl)glycinamide + L-glutamine + ATP + H2O = 2-formamido-N(1)-(5-O-phospho-beta-D-ribosyl)acetamidine + L-glutamate + ADP + phosphate + H(+). It participates in purine metabolism; IMP biosynthesis via de novo pathway; 5-amino-1-(5-phospho-D-ribosyl)imidazole from N(2)-formyl-N(1)-(5-phospho-D-ribosyl)glycinamide: step 1/2. Its function is as follows. Part of the phosphoribosylformylglycinamidine synthase complex involved in the purines biosynthetic pathway. Catalyzes the ATP-dependent conversion of formylglycinamide ribonucleotide (FGAR) and glutamine to yield formylglycinamidine ribonucleotide (FGAM) and glutamate. The FGAM synthase complex is composed of three subunits. PurQ produces an ammonia molecule by converting glutamine to glutamate. PurL transfers the ammonia molecule to FGAR to form FGAM in an ATP-dependent manner. PurS interacts with PurQ and PurL and is thought to assist in the transfer of the ammonia molecule from PurQ to PurL. The sequence is that of Phosphoribosylformylglycinamidine synthase subunit PurL from Nocardioides sp. (strain ATCC BAA-499 / JS614).